The primary structure comprises 436 residues: Ribulose bisphosphate carboxylase large chain (436 aa).

Residues asparagine 104 and threonine 154 each coordinate substrate. Lysine 156 (proton acceptor) is an active-site residue. Residue lysine 158 participates in substrate binding. Mg(2+)-binding residues include lysine 182, aspartate 184, and glutamate 185. The residue at position 182 (lysine 182) is an N6-carboxylysine. Histidine 275 (proton acceptor) is an active-site residue. Positions 276, 308, and 360 each coordinate substrate.

It belongs to the RuBisCO large chain family. Type I subfamily. Heterohexadecamer of 8 large chains and 8 small chains. Requires Mg(2+) as cofactor.

The protein localises to the plastid. The protein resides in the chloroplast. It catalyses the reaction 2 (2R)-3-phosphoglycerate + 2 H(+) = D-ribulose 1,5-bisphosphate + CO2 + H2O. It carries out the reaction D-ribulose 1,5-bisphosphate + O2 = 2-phosphoglycolate + (2R)-3-phosphoglycerate + 2 H(+). Its function is as follows. RuBisCO catalyzes two reactions: the carboxylation of D-ribulose 1,5-bisphosphate, the primary event in carbon dioxide fixation, as well as the oxidative fragmentation of the pentose substrate in the photorespiration process. Both reactions occur simultaneously and in competition at the same active site. The chain is Ribulose bisphosphate carboxylase large chain from Euglena viridis (Cercaria viridis).